The following is a 516-amino-acid chain: Probable serine/threonine-protein kinase DDB_G0293276 (516 aa).

Residues 69–115 are disordered; the sequence is SIEIDDENPYNTNNNNNSNNNNNNNNNNCNNSNNSNNNKNINSLDNI. Low complexity predominate over residues 79 to 115; the sequence is NTNNNNNSNNNNNNNNNNCNNSNNSNNNKNINSLDNI. In terms of domain architecture, Protein kinase spans 232–479; it reads YKHVECIGKG…SKDIKNHPYF (248 aa). ATP-binding positions include 238-246 and Lys-261; that span reads IGKGGYGVV. The Proton acceptor role is filled by Asp-350.

The protein belongs to the protein kinase superfamily. AGC Ser/Thr protein kinase family.

It catalyses the reaction L-seryl-[protein] + ATP = O-phospho-L-seryl-[protein] + ADP + H(+). The enzyme catalyses L-threonyl-[protein] + ATP = O-phospho-L-threonyl-[protein] + ADP + H(+). The polypeptide is Probable serine/threonine-protein kinase DDB_G0293276 (Dictyostelium discoideum (Social amoeba)).